The sequence spans 196 residues: Probable malonic semialdehyde reductase RutE (196 aa).

It belongs to the nitroreductase family. HadB/RutE subfamily. FMN serves as cofactor.

The catalysed reaction is 3-hydroxypropanoate + NADP(+) = 3-oxopropanoate + NADPH + H(+). Its function is as follows. May reduce toxic product malonic semialdehyde to 3-hydroxypropionic acid, which is excreted. The protein is Probable malonic semialdehyde reductase RutE of Escherichia coli O157:H7.